Consider the following 228-residue polypeptide: Translin (228 aa).

Residues 86 to 90 (RFHEH) are DNA/RNA binding. The leucine-zipper stretch occupies residues 177–198 (LDSGFRLLNLKNDSLRKRYDGL). At Lys-187 the chain carries N6-acetyllysine. The residue at position 190 (Ser-190) is a Phosphoserine. N6-acetyllysine is present on Lys-199.

It belongs to the translin family. In terms of assembly, ring-shaped heterooctamer of six TSN and two TSNAX subunits, DNA/RNA binding occurs inside the ring.

It localises to the cytoplasm. Its subcellular location is the nucleus. DNA-binding protein that specifically recognizes consensus sequences at the breakpoint junctions in chromosomal translocations, mostly involving immunoglobulin (Ig)/T-cell receptor gene segments. Seems to recognize single-stranded DNA ends generated by staggered breaks occurring at recombination hot spots. Its function is as follows. Exhibits both single-stranded and double-stranded endoribonuclease activity. May act as an activator of RNA-induced silencing complex (RISC) by facilitating endonucleolytic cleavage of the siRNA passenger strand. This is Translin (TSN) from Pongo abelii (Sumatran orangutan).